A 275-amino-acid chain; its full sequence is Large ribosomal subunit protein uL2 (275 aa).

A compositionally biased stretch (polar residues) spans 35–49 (DSQSSTAGRNNNGRI). 2 disordered regions span residues 35–59 (DSQSSTAGRNNNGRITTRHKGGGHK) and 224–275 (AMNP…RHKR). The span at 50–59 (TTRHKGGGHK) shows a compositional bias: basic residues.

The protein belongs to the universal ribosomal protein uL2 family. In terms of assembly, part of the 50S ribosomal subunit. Forms a bridge to the 30S subunit in the 70S ribosome.

In terms of biological role, one of the primary rRNA binding proteins. Required for association of the 30S and 50S subunits to form the 70S ribosome, for tRNA binding and peptide bond formation. It has been suggested to have peptidyltransferase activity; this is somewhat controversial. Makes several contacts with the 16S rRNA in the 70S ribosome. This chain is Large ribosomal subunit protein uL2, found in Burkholderia orbicola (strain AU 1054).